We begin with the raw amino-acid sequence, 329 residues long: DNA-directed RNA polymerase subunit alpha (329 aa).

Positions 1–235 (MQGSVTEFLK…EQLDAFVDLR (235 aa)) are alpha N-terminal domain (alpha-NTD). Residues 249–329 (FDPILLRPVD…NWPPASIAED (81 aa)) form an alpha C-terminal domain (alpha-CTD) region.

The protein belongs to the RNA polymerase alpha chain family. In terms of assembly, homodimer. The RNAP catalytic core consists of 2 alpha, 1 beta, 1 beta' and 1 omega subunit. When a sigma factor is associated with the core the holoenzyme is formed, which can initiate transcription.

The enzyme catalyses RNA(n) + a ribonucleoside 5'-triphosphate = RNA(n+1) + diphosphate. Its function is as follows. DNA-dependent RNA polymerase catalyzes the transcription of DNA into RNA using the four ribonucleoside triphosphates as substrates. This Actinobacillus succinogenes (strain ATCC 55618 / DSM 22257 / CCUG 43843 / 130Z) protein is DNA-directed RNA polymerase subunit alpha.